The sequence spans 106 residues: Nucleoid-associated protein RPD_0086 (106 aa).

Belongs to the YbaB/EbfC family. Homodimer.

The protein resides in the cytoplasm. It localises to the nucleoid. Its function is as follows. Binds to DNA and alters its conformation. May be involved in regulation of gene expression, nucleoid organization and DNA protection. The protein is Nucleoid-associated protein RPD_0086 of Rhodopseudomonas palustris (strain BisB5).